A 391-amino-acid chain; its full sequence is F-box protein At2g34280 (391 aa).

In terms of domain architecture, F-box spans 1-43; the sequence is MDLLPYDVVEHILERLDVKSLLNCKSVSKQWRSTIRCRAFQER.

This Arabidopsis thaliana (Mouse-ear cress) protein is F-box protein At2g34280.